The sequence spans 318 residues: Beta-sarcoglycan (318 aa).

The segment at 1–32 (MAAAAAAAAEQQSSNGPVKKSMREKAVERRNV) is disordered. Topologically, residues 1–65 (MAAAAAAAAE…GLRGRKGNLA (65 aa)) are cytoplasmic. Over residues 21-32 (SMREKAVERRNV) the composition is skewed to basic and acidic residues. Residues 66–86 (ICVIVLLFLLAVINLIITLVI) form a helical; Signal-anchor for type II membrane protein membrane-spanning segment. The Extracellular portion of the chain corresponds to 87–318 (WAVIRIGPNG…VSDNPCGNTH (232 aa)). Residues Asn-158, Asn-211, and Asn-258 are each glycosylated (N-linked (GlcNAc...) asparagine). Intrachain disulfides connect Cys-288-Cys-314 and Cys-290-Cys-307.

This sequence belongs to the sarcoglycan beta/delta/gamma/zeta family. In terms of assembly, cross-link to form 2 major subcomplexes: one consisting of SGCB, SGCD and SGCG and the other consisting of SGCB and SGCD. The association between SGCB and SGCG is particularly strong while SGCA is loosely associated with the other sarcoglycans. In terms of processing, disulfide bonds are present.

It localises to the cell membrane. It is found in the sarcolemma. The protein resides in the cytoplasm. Its subcellular location is the cytoskeleton. Its function is as follows. Component of the sarcoglycan complex, a subcomplex of the dystrophin-glycoprotein complex which forms a link between the F-actin cytoskeleton and the extracellular matrix. The sequence is that of Beta-sarcoglycan (SGCB) from Oryctolagus cuniculus (Rabbit).